Consider the following 368-residue polypeptide: Phosphate acyltransferase (368 aa).

The segment at 335-368 (VSLGDGEHDAGGAGPASPAAGHHAEPSAAQSSKA) is disordered. The span at 349–368 (PASPAAGHHAEPSAAQSSKA) shows a compositional bias: low complexity.

The protein belongs to the PlsX family. In terms of assembly, homodimer. Probably interacts with PlsY.

It localises to the cytoplasm. The enzyme catalyses a fatty acyl-[ACP] + phosphate = an acyl phosphate + holo-[ACP]. It participates in lipid metabolism; phospholipid metabolism. Functionally, catalyzes the reversible formation of acyl-phosphate (acyl-PO(4)) from acyl-[acyl-carrier-protein] (acyl-ACP). This enzyme utilizes acyl-ACP as fatty acyl donor, but not acyl-CoA. In Burkholderia multivorans (strain ATCC 17616 / 249), this protein is Phosphate acyltransferase.